A 210-amino-acid polypeptide reads, in one-letter code: Cell division protein SepF (210 aa).

Belongs to the SepF family. As to quaternary structure, homodimer. Interacts with FtsZ.

The protein localises to the cytoplasm. In terms of biological role, cell division protein that is part of the divisome complex and is recruited early to the Z-ring. Probably stimulates Z-ring formation, perhaps through the cross-linking of FtsZ protofilaments. Its function overlaps with FtsA. The sequence is that of Cell division protein SepF from Mycobacterium leprae (strain Br4923).